We begin with the raw amino-acid sequence, 128 residues long: Large ribosomal subunit protein bL17 (128 aa).

The protein belongs to the bacterial ribosomal protein bL17 family. Part of the 50S ribosomal subunit. Contacts protein L32.

This is Large ribosomal subunit protein bL17 from Streptococcus agalactiae serotype Ia (strain ATCC 27591 / A909 / CDC SS700).